The chain runs to 357 residues: MSSSFTTTLAGMAVGMLVLATGTNPTLAQDKPTVGIAMPTKSSARWIDDGNNMVKQFQAKGYKTDLQYAEDDIPNQLAQIETMVAKNSKVLVIAAIDGTTLTDVLQQAKDRGVKVIAYDRLIRGSENVDYYATFDNFQVGVLQGSYIVDALGLKDGKGPFNIELFGGSPDDNNAYFFYNGAMSVLQPYIDSGKLTVGSGQVGMDKVSTLRWDGATAQARMDNLLSAFYGNRRVDAVLSPYDGISIGIISSLKGVGYGSPSQPMPVVTGQDAEVPSIKSILAGEQRATVFKDTRELARITVEMVDAVLGGGTAVNDTKTYDNGKKVVPAYLLKPVSVDASNWKGTLVDSGYYTEAQFK.

The N-terminal stretch at 1 to 20 (MSSSFTTTLAGMAVGMLVLA) is a signal peptide.

The protein belongs to the bacterial solute-binding protein 2 family.

It is found in the periplasm. Its function is as follows. Mediates chemotaxis towards D-galactose, L-arabinose and D-fucose but not towards D-fructose. Probably part of a binding-protein high affinity uptake system. In Azospirillum brasilense, this protein is Multiple sugar-binding periplasmic protein SbpA (sbpA).